Reading from the N-terminus, the 149-residue chain is MAAAASESLSSGGPGAVRLPRLPPLKVLAGQLRRHAEGGPGAWRLSRAAVGRAPLELVAVWMQGTVLAAEGGQARLRDSSGAFSVRGLERVPRGRPCLLPGKYVMVMGVVQACSPEPCLQAVKMTDLSDNPVHESMWELEVEDLHRNIP.

Position 8 is a phosphoserine (S8). The OB DNA-binding region spans 46 to 116 (SRAAVGRAPL…MGVVQACSPE (71 aa)).

This sequence belongs to the RMI2 family. Component of the RMI complex, containing at least TOP3A, RMI1 and RMI2. The RMI complex interacts with BLM. In terms of processing, phosphorylated during mitosis.

Its subcellular location is the nucleus. Essential component of the RMI complex, a complex that plays an important role in the processing of homologous recombination intermediates. It is required to regulate sister chromatid segregation and to limit DNA crossover. Essential for the stability, localization, and function of BLM, TOP3A, and complexes containing BLM. In the RMI complex, it is required to target BLM to chromatin and stress-induced nuclear foci and mitotic phosphorylation of BLM. The polypeptide is RecQ-mediated genome instability protein 2 (Rmi2) (Mus musculus (Mouse)).